The primary structure comprises 347 residues: GTP 3',8-cyclase (347 aa).

The region spanning 12-242 (FRPFGVLRLS…QRIDARWPLR (231 aa)) is the Radical SAM core domain. Arg-19 provides a ligand contact to GTP. [4Fe-4S] cluster contacts are provided by Cys-26 and Cys-30. An S-adenosyl-L-methionine-binding site is contributed by Tyr-32. Cys-33 provides a ligand contact to [4Fe-4S] cluster. A GTP-binding site is contributed by Arg-65. Gly-69 serves as a coordination point for S-adenosyl-L-methionine. Thr-104 lines the GTP pocket. Ser-129 lines the S-adenosyl-L-methionine pocket. Lys-178 contributes to the GTP binding site. Position 212 (Met-212) interacts with S-adenosyl-L-methionine. [4Fe-4S] cluster contacts are provided by Cys-275 and Cys-278. 280 to 282 (RLR) lines the GTP pocket. Cys-292 is a binding site for [4Fe-4S] cluster.

Belongs to the radical SAM superfamily. MoaA family. As to quaternary structure, monomer and homodimer. The cofactor is [4Fe-4S] cluster.

The catalysed reaction is GTP + AH2 + S-adenosyl-L-methionine = (8S)-3',8-cyclo-7,8-dihydroguanosine 5'-triphosphate + 5'-deoxyadenosine + L-methionine + A + H(+). Its pathway is cofactor biosynthesis; molybdopterin biosynthesis. In terms of biological role, catalyzes the cyclization of GTP to (8S)-3',8-cyclo-7,8-dihydroguanosine 5'-triphosphate. This chain is GTP 3',8-cyclase, found in Synechococcus sp. (strain WH7803).